Here is a 295-residue protein sequence, read N- to C-terminus: Protease HtpX homolog (295 aa).

The next 2 helical transmembrane spans lie at 15-35 (LVMA…GYAF) and 39-59 (AQTG…VILG). A Zn(2+)-binding site is contributed by His143. Residue Glu144 is part of the active site. His147 is a binding site for Zn(2+). 2 helical membrane-spanning segments follow: residues 159–179 (ALAL…AMWW) and 195–215 (VIML…ASMA). Glu224 serves as a coordination point for Zn(2+).

This sequence belongs to the peptidase M48B family. Requires Zn(2+) as cofactor.

It localises to the cell membrane. The chain is Protease HtpX homolog from Ligilactobacillus salivarius (strain UCC118) (Lactobacillus salivarius).